Reading from the N-terminus, the 231-residue chain is Large ribosomal subunit protein uL1 (231 aa).

It belongs to the universal ribosomal protein uL1 family. As to quaternary structure, part of the 50S ribosomal subunit.

Binds directly to 23S rRNA. The L1 stalk is quite mobile in the ribosome, and is involved in E site tRNA release. In terms of biological role, protein L1 is also a translational repressor protein, it controls the translation of the L11 operon by binding to its mRNA. This Gluconacetobacter diazotrophicus (strain ATCC 49037 / DSM 5601 / CCUG 37298 / CIP 103539 / LMG 7603 / PAl5) protein is Large ribosomal subunit protein uL1.